The primary structure comprises 209 residues: Ribosomal RNA large subunit methyltransferase E (209 aa).

Positions 60, 62, 80, 96, and 121 each coordinate S-adenosyl-L-methionine. Lysine 161 acts as the Proton acceptor in catalysis. The segment covering 182–196 (VQMRKPSSSRDRSRE) has biased composition (basic and acidic residues). The disordered stretch occupies residues 182-209 (VQMRKPSSSRDRSREQYLLGRGFRGRSE).

This sequence belongs to the class I-like SAM-binding methyltransferase superfamily. RNA methyltransferase RlmE family.

The protein resides in the cytoplasm. The catalysed reaction is uridine(2552) in 23S rRNA + S-adenosyl-L-methionine = 2'-O-methyluridine(2552) in 23S rRNA + S-adenosyl-L-homocysteine + H(+). Its function is as follows. Specifically methylates the uridine in position 2552 of 23S rRNA at the 2'-O position of the ribose in the fully assembled 50S ribosomal subunit. This is Ribosomal RNA large subunit methyltransferase E from Pseudomonas fluorescens (strain ATCC BAA-477 / NRRL B-23932 / Pf-5).